The chain runs to 473 residues: Ribulose bisphosphate carboxylase large chain (473 aa).

Residues N116 and T166 each contribute to the substrate site. The active-site Proton acceptor is the K168. Residue K170 coordinates substrate. Mg(2+)-binding residues include K194, D196, and E197. K194 carries the post-translational modification N6-carboxylysine. H287 (proton acceptor) is an active-site residue. Residues R288, H320, and S372 each coordinate substrate.

The protein belongs to the RuBisCO large chain family. Type I subfamily. Heterohexadecamer of 8 large chains and 8 small chains. The cofactor is Mg(2+).

The catalysed reaction is 2 (2R)-3-phosphoglycerate + 2 H(+) = D-ribulose 1,5-bisphosphate + CO2 + H2O. It carries out the reaction D-ribulose 1,5-bisphosphate + O2 = 2-phosphoglycolate + (2R)-3-phosphoglycerate + 2 H(+). Its function is as follows. RuBisCO catalyzes two reactions: the carboxylation of D-ribulose 1,5-bisphosphate, the primary event in carbon dioxide fixation, as well as the oxidative fragmentation of the pentose substrate. Both reactions occur simultaneously and in competition at the same active site. The sequence is that of Ribulose bisphosphate carboxylase large chain from Nitrosomonas europaea (strain ATCC 19718 / CIP 103999 / KCTC 2705 / NBRC 14298).